We begin with the raw amino-acid sequence, 324 residues long: Myoblast determination protein 1 homolog (324 aa).

The tract at residues 125–146 (VDSQHEDTTTSTAGGAGVGGPR) is disordered. The 52-residue stretch at 155–206 (DRRKAATMRERRRLRKVNEAFEVVKQRTCPNPNQRLPKVEILRSAIDYINNL) folds into the bHLH domain. A disordered region spans residues 251–272 (YNPENMFDDDDLTDSDDDRDHH). Over residues 256-267 (MFDDDDLTDSDD) the composition is skewed to acidic residues.

In terms of assembly, efficient DNA binding requires dimerization with another bHLH protein. As to expression, body wall muscle cells; in clonal muscle precursors, in a set of early embryonic blastomeres (the ms-granddaughters), and in six glial-like cells called GLRS.

It is found in the nucleus. Functionally, involved in myogenesis, in cooperation with transcription factors unc-120 and hnd-1. Acts redundantly with fozi-1 to promote body wall muscle cell and coelomocyte specification in postembryonic mesoderm progenitors, probably through suppression of sem-2. In Caenorhabditis elegans, this protein is Myoblast determination protein 1 homolog.